Here is a 197-residue protein sequence, read N- to C-terminus: Small ribosomal subunit protein uS11m (197 aa).

Basic and acidic residues predominate over residues 43–52 (AAKEEVEKAE). The segment at 43 to 66 (AAKEEVEKAETPAPAPSRSSFSIY) is disordered.

The protein belongs to the universal ribosomal protein uS11 family. As to quaternary structure, component of the mitochondrial ribosome small subunit (28S) which comprises a 12S rRNA and about 30 distinct proteins.

The protein localises to the mitochondrion. The polypeptide is Small ribosomal subunit protein uS11m (MRPS11) (Bos taurus (Bovine)).